The primary structure comprises 195 residues: MSVHIELPRELRPLMKKPLGTLYRGKGRDTIEKFAGELGSPTKLISVGDVTTFHLLEVGIIPDICIVDNRTKRKPVSSDVSARNMDKVYSEVSVDNPAGIITDELIKTLCEAFASEKPIRIFVRGEEDLATLPVILLAPLDAVVLYGQPDEGVVFVKVTEEKKGEIRTLFEKLISKNQNYELDKLRRILDGHKNS.

Positions 49, 50, 68, 127, and 150 each coordinate GTP.

This sequence belongs to the GTP-dependent DPCK family.

The enzyme catalyses 3'-dephospho-CoA + GTP = GDP + CoA + H(+). It functions in the pathway cofactor biosynthesis; coenzyme A biosynthesis. Catalyzes the GTP-dependent phosphorylation of the 3'-hydroxyl group of dephosphocoenzyme A to form coenzyme A (CoA). The chain is GTP-dependent dephospho-CoA kinase from Methanosarcina barkeri (strain Fusaro / DSM 804).